A 102-amino-acid chain; its full sequence is Small ribosomal subunit protein uS10 (102 aa).

This sequence belongs to the universal ribosomal protein uS10 family. As to quaternary structure, part of the 30S ribosomal subunit.

Functionally, involved in the binding of tRNA to the ribosomes. This chain is Small ribosomal subunit protein uS10, found in Clostridium perfringens (strain ATCC 13124 / DSM 756 / JCM 1290 / NCIMB 6125 / NCTC 8237 / Type A).